Consider the following 806-residue polypeptide: ATP-dependent zinc metalloprotease FTSH 11, chloroplastic/mitochondrial (806 aa).

The transit peptide at 1–63 directs the protein to the chloroplast and mitochondrion; it reads MSSSTLQASL…RFRPLPCSLR (63 aa). Positions 106 to 116 are enriched in basic and acidic residues; the sequence is FVGGEETKSGG. The disordered stretch occupies residues 106-130; sequence FVGGEETKSGGEEAEVSNGVTEGKE. Residues 301–321 form a helical membrane-spanning segment; that stretch reads LVSTILFTVAVGLVWIMGAAA. 402 to 409 contacts ATP; the sequence is GAPGTGKT. Position 620 (His-620) interacts with Zn(2+). The active site involves Glu-621. Zn(2+) is bound by residues His-624 and Asp-698.

It in the N-terminal section; belongs to the AAA ATPase family. In the C-terminal section; belongs to the peptidase M41 family. Homooligomer. The cofactor is Zn(2+).

The protein resides in the mitochondrion inner membrane. The protein localises to the plastid. It localises to the chloroplast thylakoid membrane. Its function is as follows. Probable ATP-dependent zinc metallopeptidase. Involved in the assembly and/or stability of the complexes I and V. Involved in thermotolerance but not in high light stress resistance or in the assembly/stability of the complexes I and V of the mitochondrial oxidative phosphorylation system. The sequence is that of ATP-dependent zinc metalloprotease FTSH 11, chloroplastic/mitochondrial (FTSH11) from Arabidopsis thaliana (Mouse-ear cress).